A 329-amino-acid chain; its full sequence is Alpha/beta hydrolase domain-containing protein 17C (329 aa).

Residues 46–85 (APEQRGPGAPAPASAASTSSASAAAQPAPQQPEEGGAGPG) are disordered. A compositionally biased stretch (low complexity) spans 51-79 (GPGAPAPASAASTSSASAAAQPAPQQPEE). Active-site charge relay system residues include serine 211, aspartate 276, and histidine 305.

This sequence belongs to the AB hydrolase superfamily. ABHD17 family. Palmitoylated on cysteine residues located in a cysteine cluster at the N-terminus which promotes membrane localization. Palmitoylation is required for post-synaptic localization and for depalmitoylating activity towards DLG4/PSD95.

It localises to the recycling endosome membrane. It is found in the cell projection. Its subcellular location is the dendritic spine. The protein resides in the postsynaptic density membrane. The catalysed reaction is S-hexadecanoyl-L-cysteinyl-[protein] + H2O = L-cysteinyl-[protein] + hexadecanoate + H(+). Hydrolyzes fatty acids from S-acylated cysteine residues in proteins. Has depalmitoylating activity towards NRAS and DLG4/PSD95. This Bos taurus (Bovine) protein is Alpha/beta hydrolase domain-containing protein 17C.